Consider the following 111-residue polypeptide: Aspartate 1-decarboxylase (111 aa).

S25 functions as the Schiff-base intermediate with substrate; via pyruvic acid in the catalytic mechanism. Pyruvic acid (Ser) is present on S25. T57 is a substrate binding site. Y58 functions as the Proton donor in the catalytic mechanism. Residue 73–75 coordinates substrate; that stretch reads GPA.

It belongs to the PanD family. As to quaternary structure, heterooctamer of four alpha and four beta subunits. Pyruvate is required as a cofactor. Post-translationally, is synthesized initially as an inactive proenzyme, which is activated by self-cleavage at a specific serine bond to produce a beta-subunit with a hydroxyl group at its C-terminus and an alpha-subunit with a pyruvoyl group at its N-terminus.

Its subcellular location is the cytoplasm. The catalysed reaction is L-aspartate + H(+) = beta-alanine + CO2. The protein operates within cofactor biosynthesis; (R)-pantothenate biosynthesis; beta-alanine from L-aspartate: step 1/1. Catalyzes the pyruvoyl-dependent decarboxylation of aspartate to produce beta-alanine. This Coxiella burnetii (strain RSA 493 / Nine Mile phase I) protein is Aspartate 1-decarboxylase.